A 350-amino-acid chain; its full sequence is Eukaryotic translation initiation factor 3 subunit I (350 aa).

WD repeat units follow at residues 8-49 (GHER…GTLE), 51-89 (HQGVIWSIDVDPETHLCATGGGDLAIKLWKVENGQCVYT), 91-135 (DSPS…ATLS), 149-188 (SEGSKATVAGWSGDGDYIIVGHDNGYVSKYDSKTGKLVTS), 198-240 (EKNV…KVYK), and 296-335 (GHFGPLNTVAVHPDGTGYSSGGEDGFIRVHTFDKSYQDFL).

Belongs to the eIF-3 subunit I family. Component of the eukaryotic translation initiation factor 3 (eIF-3) complex.

The protein localises to the cytoplasm. In terms of biological role, component of the eukaryotic translation initiation factor 3 (eIF-3) complex, which is involved in protein synthesis of a specialized repertoire of mRNAs and, together with other initiation factors, stimulates binding of mRNA and methionyl-tRNAi to the 40S ribosome. The eIF-3 complex specifically targets and initiates translation of a subset of mRNAs involved in cell proliferation. The polypeptide is Eukaryotic translation initiation factor 3 subunit I (Candida albicans (strain SC5314 / ATCC MYA-2876) (Yeast)).